The primary structure comprises 445 residues: Sodium/proton-dependent alanine carrier protein (445 aa).

The next 9 helical transmembrane spans lie at 41–61 (IAYG…IGAA), 103–123 (AAII…SIAD), 129–149 (FGIP…FTIF), 159–179 (AEIV…AIIA), 188–208 (VFGL…GILG), 249–269 (AFSI…MILF), 304–324 (TLFP…FAFT), 349–369 (AFFA…VKTA), and 375–395 (MGDI…LLLF).

This sequence belongs to the alanine or glycine:cation symporter (AGCS) (TC 2.A.25) family. Post-translationally, the N-terminus is blocked.

The protein localises to the cell membrane. Mediates the active transport of alanine, driven by either an H(+) or Na(+) gradient. This is Sodium/proton-dependent alanine carrier protein from Bacillus sp. (strain PS3).